A 457-amino-acid polypeptide reads, in one-letter code: D-xylose transporter (457 aa).

The next 10 helical transmembrane spans lie at Ala-14–Ile-34, Gly-46–Ser-66, Ile-81–Ile-101, Ile-104–Leu-124, Gly-131–Thr-151, Trp-164–Pro-184, Leu-244–Tyr-264, Leu-281–Ile-301, Lys-309–Met-329, and Ala-338–Gly-358. A beta-D-xylose-binding site is contributed by Gln-138. Residues Gln-254–Gln-255 and Asn-260 contribute to the beta-D-xylose site. Beta-D-xylose is bound by residues Trp-362 and Asn-385. Transmembrane regions (helical) follow at residues Phe-380 to Leu-400 and Phe-402 to Phe-422.

Belongs to the major facilitator superfamily. Sugar transporter (TC 2.A.1.1) family.

The protein localises to the cell membrane. Transport is inhibited by 6-deoxy-D-glucose. Uptake of D-xylose across the boundary membrane with the concomitant transport of protons into the cell (symport system). Transport is driven by the proton motive force generated by either malolactic fermentation or by the metabolism of D-glucose. This Levilactobacillus brevis (Lactobacillus brevis) protein is D-xylose transporter.